The following is a 503-amino-acid chain: MAIKAEEISALLKSQIENYESGMTVTDVGTVIQVGDGIALVHGLNNVMAGELVEFHNGVLGLAQNLEENNVGVVILGPFTDIKEGDEVKRTGRIMEVPVGEELIGRVVNPLGQPIDGRGPLNTTKTRPIESPATGVMDRKSVDEPLQTGIKAIDALVPIGRGQRELIIGDRQTGKTTVAIDTILNQKDEDMICVYVAIGQKESTVRTAVETLRAHGALDYTIVVSASASQPAPLLYIAPYAGVAMAEEFMFNGKHVLIVYDDLTKQAAAYRELSLLLRRPPGREAYPGDVFYLHSRLLERAAKLNDSLGGGSITALPFVETQAGDISAYVPTNVISITDGQIFLQSDLFFSGVRPAINAGLSVSRVGGSAQIKAMKKVAGTLRLDLASYRELESFAQFGSDLDPATKAKLERGKRTVEVLKQDQNKPLTVDKQVTILYALTKGHLDDIPVQDITRFEDEFLGWVGSNAPHIYQEIRETKGLPADEVFVEAINAFKKIFNKSEV.

169-176 (GDRQTGKT) is an ATP binding site.

The protein belongs to the ATPase alpha/beta chains family. In terms of assembly, F-type ATPases have 2 components, CF(1) - the catalytic core - and CF(0) - the membrane proton channel. CF(1) has five subunits: alpha(3), beta(3), gamma(1), delta(1), epsilon(1). CF(0) has three main subunits: a(1), b(2) and c(9-12). The alpha and beta chains form an alternating ring which encloses part of the gamma chain. CF(1) is attached to CF(0) by a central stalk formed by the gamma and epsilon chains, while a peripheral stalk is formed by the delta and b chains.

The protein localises to the cell membrane. It catalyses the reaction ATP + H2O + 4 H(+)(in) = ADP + phosphate + 5 H(+)(out). Functionally, produces ATP from ADP in the presence of a proton gradient across the membrane. The alpha chain is a regulatory subunit. The polypeptide is ATP synthase subunit alpha (Macrococcus caseolyticus (strain JCSC5402) (Macrococcoides caseolyticum)).